The following is a 333-amino-acid chain: MSTLVESPVPSNDSQAAAPAAYDPTQKQKSQAKTARIPIKVVAAEKLKKPEWIRVRAAAPGSRFYDIKRILREHNLHTVCEEASCPNIGECFGKGTATFMIMGDKCTRRCPFCDVGHGRPDPLDTQEPENLARTIAALKLSYVVITSVDRDDLRDGGAAHFVECIAKVREYSPDTRIEVLVPDFRGRLDRALHILNSGPPDVMNHNLETVPRLYKQARPGSDYAHSLKLLVEFKKLHPEVPTKSGLMLGLGETDEEILQVMRDMREHNVDMLTIGQYLQPSEHHLPVLRYVHPDTFAMFEREAYAMGFTHAAVGAMVRSSYHADQQAHAAGVN.

Over residues 1 to 15 (MSTLVESPVPSNDSQ) the composition is skewed to polar residues. Residues 1–34 (MSTLVESPVPSNDSQAAAPAAYDPTQKQKSQAKT) are disordered. [4Fe-4S] cluster contacts are provided by cysteine 80, cysteine 85, cysteine 91, cysteine 106, cysteine 110, cysteine 113, and serine 320. Residues 91-309 (CFGKGTATFM…EREAYAMGFT (219 aa)) enclose the Radical SAM core domain.

This sequence belongs to the radical SAM superfamily. Lipoyl synthase family. It depends on [4Fe-4S] cluster as a cofactor.

It localises to the cytoplasm. It carries out the reaction [[Fe-S] cluster scaffold protein carrying a second [4Fe-4S](2+) cluster] + N(6)-octanoyl-L-lysyl-[protein] + 2 oxidized [2Fe-2S]-[ferredoxin] + 2 S-adenosyl-L-methionine + 4 H(+) = [[Fe-S] cluster scaffold protein] + N(6)-[(R)-dihydrolipoyl]-L-lysyl-[protein] + 4 Fe(3+) + 2 hydrogen sulfide + 2 5'-deoxyadenosine + 2 L-methionine + 2 reduced [2Fe-2S]-[ferredoxin]. Its pathway is protein modification; protein lipoylation via endogenous pathway; protein N(6)-(lipoyl)lysine from octanoyl-[acyl-carrier-protein]: step 2/2. Its function is as follows. Catalyzes the radical-mediated insertion of two sulfur atoms into the C-6 and C-8 positions of the octanoyl moiety bound to the lipoyl domains of lipoate-dependent enzymes, thereby converting the octanoylated domains into lipoylated derivatives. This Bordetella parapertussis (strain 12822 / ATCC BAA-587 / NCTC 13253) protein is Lipoyl synthase.